Here is a 498-residue protein sequence, read N- to C-terminus: ATP synthase subunit beta, chloroplastic (498 aa).

172-179 (GGAGVGKT) is an ATP binding site.

The protein belongs to the ATPase alpha/beta chains family. As to quaternary structure, F-type ATPases have 2 components, CF(1) - the catalytic core - and CF(0) - the membrane proton channel. CF(1) has five subunits: alpha(3), beta(3), gamma(1), delta(1), epsilon(1). CF(0) has four main subunits: a(1), b(1), b'(1) and c(9-12).

It localises to the plastid. The protein localises to the chloroplast thylakoid membrane. The catalysed reaction is ATP + H2O + 4 H(+)(in) = ADP + phosphate + 5 H(+)(out). Produces ATP from ADP in the presence of a proton gradient across the membrane. The catalytic sites are hosted primarily by the beta subunits. This chain is ATP synthase subunit beta, chloroplastic, found in Nicotiana bigelovii (Bigelov's tobacco).